A 544-amino-acid chain; its full sequence is Rubrofusarin-specific efflux pump aurT (544 aa).

A compositionally biased stretch (basic and acidic residues) spans 1–12; sequence MTDNTDMEKLDR. Residues 1 to 42 are disordered; that stretch reads MTDNTDMEKLDRATTPTPIPNEAPPTSEPSESKPEEAEDESK. Over residues 17–27 the composition is skewed to pro residues; sequence TPIPNEAPPTS. Residues 30 to 42 are compositionally biased toward basic and acidic residues; it reads SESKPEEAEDESK. A run of 8 helical transmembrane segments spans residues 45–65, 89–111, 116–136, 146–166, 177–197, 205–225, 246–266, and 276–296; these read HGLKLAAIILSNMVAMFLVAL, WYASAYLITSSATQLLWGRIFTF, TVYLVAIFFFELGSLLCGVAP, AIAGAGSAGIYSGSTILITTV, GMMGAVFGIASVIAPLIGGAF, WCFYINLPVGGAAVACLILLF, WGNLVFLPGVICLILALQWGG, and IVALLVLACVLLLVFIGIQIW. A glycan (N-linked (GlcNAc...) asparagine) is linked at asparagine 300. A run of 6 helical transmembrane segments spans residues 318 to 338, 357 to 377, 380 to 400, 407 to 427, 444 to 464, and 514 to 534; these read IFAFCLGSVLIVFLIALPIWF, VLSLVFGAIVSGGVINGVGWF, VFFSSVIFMSVGGGLITTFVV, WIGYQIILGLGIGQGMQLASL, LMFFAQSLGGSVLVCVAQAVF, and YFYVGLAAACFAVLPSLGIEW.

This sequence belongs to the major facilitator superfamily. TCR/Tet family.

The protein resides in the cell membrane. Its pathway is pigment biosynthesis. Functionally, rubrofusarin-specific efflux pump; part of the gene cluster that mediates the biosynthesis of aurofusarin, a red mycelium pigment which is acting as a mycotoxin. The first step is performed by the polyketide synthase which condenses one acetyl-CoA and 6 malonyl-CoA units to form the first intermediate, the cyclic heptaketide and yellow pigment YWA1. The C2 hydroxyl group in the pyrone ring of YWA1 is probably formed during ring closure by an aldol-type cyclization reaction. The dehydratase aurZ then acts as the first tailoring enzyme in the aurofusarin biosynthetic pathway by converting YWA1 to nor-rubrofusarin. Nor-rubrofusarin is then methylated to rubrofusarin by the O-methyltransferase aurJ. Rubrofusarin is then transported across the plasma membrane by the rubrofusarin-specific pump aurT for further enzymatic processing by the extracellular complex composed of GIP1, aurF, aurO and aurS to yield aurofusarin. The chain is Rubrofusarin-specific efflux pump aurT from Gibberella zeae (strain ATCC MYA-4620 / CBS 123657 / FGSC 9075 / NRRL 31084 / PH-1) (Wheat head blight fungus).